The primary structure comprises 60 residues: Sec-independent protein translocase protein TatA (60 aa).

Residues 1 to 21 form a helical membrane-spanning segment; that stretch reads MLSNIGVPGLILILVIALVIF.

The protein belongs to the TatA/E family. As to quaternary structure, forms a complex with TatC.

It is found in the cell membrane. Functionally, part of the twin-arginine translocation (Tat) system that transports large folded proteins containing a characteristic twin-arginine motif in their signal peptide across membranes. TatA could form the protein-conducting channel of the Tat system. In Anoxybacillus flavithermus (strain DSM 21510 / WK1), this protein is Sec-independent protein translocase protein TatA.